A 295-amino-acid polypeptide reads, in one-letter code: Probable protein phosphatase 2C 6 (295 aa).

A PPM-type phosphatase domain is found at 23–294 (QYAATHMQGW…DNMTCILIQF (272 aa)). Positions 57, 58, 237, and 285 each coordinate Mn(2+).

Belongs to the PP2C family. Requires Mg(2+) as cofactor. The cofactor is Mn(2+).

It is found in the membrane. The catalysed reaction is O-phospho-L-seryl-[protein] + H2O = L-seryl-[protein] + phosphate. The enzyme catalyses O-phospho-L-threonyl-[protein] + H2O = L-threonyl-[protein] + phosphate. Enzyme with a broad specificity. The chain is Probable protein phosphatase 2C 6 from Paramecium tetraurelia.